The following is a 411-amino-acid chain: Tyrosine--tRNA ligase (411 aa).

Position 34 (Tyr-34) interacts with L-tyrosine. Positions 39-48 (CTATSLHIGS) match the 'HIGH' region motif. L-tyrosine is bound by residues Tyr-171 and Gln-175. Positions 231 to 235 (KMGKT) match the 'KMSKS' region motif. Lys-234 contacts ATP. The region spanning 345–411 (ISAYNLFYNA…GKKRHILVKV (67 aa)) is the S4 RNA-binding domain.

It belongs to the class-I aminoacyl-tRNA synthetase family. TyrS type 1 subfamily. Homodimer.

It is found in the cytoplasm. The catalysed reaction is tRNA(Tyr) + L-tyrosine + ATP = L-tyrosyl-tRNA(Tyr) + AMP + diphosphate + H(+). Functionally, catalyzes the attachment of tyrosine to tRNA(Tyr) in a two-step reaction: tyrosine is first activated by ATP to form Tyr-AMP and then transferred to the acceptor end of tRNA(Tyr). In Rickettsia prowazekii (strain Madrid E), this protein is Tyrosine--tRNA ligase.